The following is a 182-amino-acid chain: Adenine phosphoribosyltransferase (182 aa).

It belongs to the purine/pyrimidine phosphoribosyltransferase family. As to quaternary structure, homodimer.

It is found in the cytoplasm. The catalysed reaction is AMP + diphosphate = 5-phospho-alpha-D-ribose 1-diphosphate + adenine. The protein operates within purine metabolism; AMP biosynthesis via salvage pathway; AMP from adenine: step 1/1. In terms of biological role, catalyzes a salvage reaction resulting in the formation of AMP, that is energically less costly than de novo synthesis. This chain is Adenine phosphoribosyltransferase, found in Pseudomonas paraeruginosa (strain DSM 24068 / PA7) (Pseudomonas aeruginosa (strain PA7)).